Reading from the N-terminus, the 514-residue chain is Ras-GEF domain-containing family member 1B-A (514 aa).

The region spanning 76–206 (HDNNLISGSL…MTQTLIRKLT (131 aa)) is the N-terminal Ras-GEF domain. The 249-residue stretch at 246 to 494 (DPFTLAQQLT…YLASYESEGP (249 aa)) folds into the Ras-GEF domain.

In terms of tissue distribution, detected in oocytes, and in embryos at 4 to 120 hours post-fertilization (hpf). Detected along marginal blastomeres at early epiboly stage and throughout the margin at the onset of gastrulation. At 60% epiboly, strongest expression is found in the dorsal shield region and is restricted to the epiblast. Detected in the anterior border of the presomitic mesoderm at the end of epiboly. Detected in adaxial cells, in the somites and in the nervous system during somitogenesis. Detected in diencephalon and hindbrain and in cells surrounding the notochord, including adaxial cells and ventral mesendoderm, in 15-somite stage embryos. At 48 hpf, detected mainly in the brain.

In terms of biological role, guanine nucleotide exchange factor (GEF) for Ras family proteins (in vitro). This is Ras-GEF domain-containing family member 1B-A (rasgef1ba) from Danio rerio (Zebrafish).